Here is a 344-residue protein sequence, read N- to C-terminus: Dihydroorotase (344 aa).

Residues His-14 and His-16 each coordinate Zn(2+). Residues 16–18 and Asn-42 each bind substrate; that span reads HFR. The Zn(2+) site is built by Lys-100, His-137, and His-175. The residue at position 100 (Lys-100) is an N6-carboxylysine. A substrate-binding site is contributed by His-137. Residue Leu-220 coordinates substrate. Residue Asp-248 participates in Zn(2+) binding. Asp-248 is a catalytic residue. 2 residues coordinate substrate: His-252 and Ala-264.

Belongs to the metallo-dependent hydrolases superfamily. DHOase family. Class II DHOase subfamily. Homodimer. It depends on Zn(2+) as a cofactor.

It catalyses the reaction (S)-dihydroorotate + H2O = N-carbamoyl-L-aspartate + H(+). It functions in the pathway pyrimidine metabolism; UMP biosynthesis via de novo pathway; (S)-dihydroorotate from bicarbonate: step 3/3. Its function is as follows. Catalyzes the reversible cyclization of carbamoyl aspartate to dihydroorotate. This chain is Dihydroorotase, found in Erythrobacter litoralis (strain HTCC2594).